The following is a 466-amino-acid chain: Glutamate--tRNA ligase (466 aa).

The 'HIGH' region signature appears at 10-20 (PSPTGYLHIGG). A 'KMSKS' region motif is present at residues 237-241 (RLSKR). Lysine 240 contacts ATP.

This sequence belongs to the class-I aminoacyl-tRNA synthetase family. Glutamate--tRNA ligase type 1 subfamily. In terms of assembly, monomer.

Its subcellular location is the cytoplasm. The enzyme catalyses tRNA(Glu) + L-glutamate + ATP = L-glutamyl-tRNA(Glu) + AMP + diphosphate. Functionally, catalyzes the attachment of glutamate to tRNA(Glu) in a two-step reaction: glutamate is first activated by ATP to form Glu-AMP and then transferred to the acceptor end of tRNA(Glu). In Syntrophotalea carbinolica (strain DSM 2380 / NBRC 103641 / GraBd1) (Pelobacter carbinolicus), this protein is Glutamate--tRNA ligase.